A 738-amino-acid polypeptide reads, in one-letter code: 1,4-alpha-glucan branching enzyme GlgB (738 aa).

The active-site Nucleophile is the aspartate 399. The active-site Proton donor is the glutamate 452.

Belongs to the glycosyl hydrolase 13 family. GlgB subfamily. Monomer.

It carries out the reaction Transfers a segment of a (1-&gt;4)-alpha-D-glucan chain to a primary hydroxy group in a similar glucan chain.. Its pathway is glycan biosynthesis; glycogen biosynthesis. In terms of biological role, catalyzes the formation of the alpha-1,6-glucosidic linkages in glycogen by scission of a 1,4-alpha-linked oligosaccharide from growing alpha-1,4-glucan chains and the subsequent attachment of the oligosaccharide to the alpha-1,6 position. This chain is 1,4-alpha-glucan branching enzyme GlgB, found in Chlamydia trachomatis serovar L2b (strain UCH-1/proctitis).